Consider the following 265-residue polypeptide: Imidazole glycerol phosphate synthase subunit HisF (265 aa).

Active-site residues include Asp-12 and Asp-131.

Belongs to the HisA/HisF family. Heterodimer of HisH and HisF.

It is found in the cytoplasm. It carries out the reaction 5-[(5-phospho-1-deoxy-D-ribulos-1-ylimino)methylamino]-1-(5-phospho-beta-D-ribosyl)imidazole-4-carboxamide + L-glutamine = D-erythro-1-(imidazol-4-yl)glycerol 3-phosphate + 5-amino-1-(5-phospho-beta-D-ribosyl)imidazole-4-carboxamide + L-glutamate + H(+). It participates in amino-acid biosynthesis; L-histidine biosynthesis; L-histidine from 5-phospho-alpha-D-ribose 1-diphosphate: step 5/9. In terms of biological role, IGPS catalyzes the conversion of PRFAR and glutamine to IGP, AICAR and glutamate. The HisF subunit catalyzes the cyclization activity that produces IGP and AICAR from PRFAR using the ammonia provided by the HisH subunit. This is Imidazole glycerol phosphate synthase subunit HisF from Alkalilimnicola ehrlichii (strain ATCC BAA-1101 / DSM 17681 / MLHE-1).